Here is a 95-residue protein sequence, read N- to C-terminus: Glycophorin-C (95 aa).

At 1 to 25 (MSSPVRTPPPERLEPNPGMSYAVME) the chain is on the extracellular side. A helical; Signal-anchor for type III membrane protein transmembrane segment spans residues 26–46 (IAIIAAVITAVALVLVCLLFL). At 47-95 (MLRYLYRHKGTYYTNEAKGTEFAESADAALQSDPALQDAGDTSKKEYFI) the chain is on the cytoplasmic side. Residues Ser-71, Ser-78, and Ser-89 each carry the phosphoserine modification.

It belongs to the glycophorin-C family.

Its subcellular location is the cell membrane. The polypeptide is Glycophorin-C (Gypc) (Rattus norvegicus (Rat)).